A 150-amino-acid chain; its full sequence is Probable FKBP-type 16 kDa peptidyl-prolyl cis-trans isomerase (150 aa).

One can recognise a PPIase FKBP-type domain in the interval asparagine 14–proline 88.

Belongs to the FKBP-type PPIase family.

It catalyses the reaction [protein]-peptidylproline (omega=180) = [protein]-peptidylproline (omega=0). In terms of biological role, PPIases accelerate the folding of proteins. The sequence is that of Probable FKBP-type 16 kDa peptidyl-prolyl cis-trans isomerase (yaaD) from Pseudomonas fluorescens.